A 258-amino-acid polypeptide reads, in one-letter code: Capsid protein (258 aa).

A Bipartite nuclear localization signal motif is present at residues 3–20 (KRPGDIIISTPGSKVRRR). The Nuclear localization signal signature appears at 41-55 (RKRAWMNRPMYRKPM). A zinc finger lies at 69–86 (CEGPCKVQSFEQRDDVKH). Residues 102–123 (LTHRVGKRFCIKSIYILGKIWM) carry the Nuclear export signal motif. The short motif at 202 to 249 (KRFYRLNHHVTYNHQEAGKYENHTENALLLYMACTHASNPVYATLKIR) is the Bipartite nuclear localization signal element.

This sequence belongs to the geminiviridae capsid protein family. Homomultimer. Binds to single-stranded and double-stranded viral DNA. Interacts (via nuclear localization signals) with host importin alpha-1a.

It localises to the virion. The protein localises to the host nucleus. In terms of biological role, encapsidates the viral DNA into characteristic twinned ('geminate') particles. Binds the genomic viral ssDNA and shuttles it into and out of the cell nucleus. The CP of bipartite geminiviruses is not required for cell-to-cell or systemic movement. The chain is Capsid protein from Hewittia sublobata (Coralbush).